The chain runs to 182 residues: Lipoprotein signal peptidase (182 aa).

3 helical membrane passes run 21-41 (LLLSVAATVLALDIVTKVLAV), 74-94 (GYTWVLTLIATGVVVGIFWMG), and 98-118 (VSPWWAVGLGMILGGAMGNLV). Catalysis depends on residues Asp134 and Asp148. The helical transmembrane segment at 146–166 (VADPSVVGGAILLVVLSIFGY) threads the bilayer.

The protein belongs to the peptidase A8 family.

Its subcellular location is the cell membrane. The catalysed reaction is Release of signal peptides from bacterial membrane prolipoproteins. Hydrolyzes -Xaa-Yaa-Zaa-|-(S,diacylglyceryl)Cys-, in which Xaa is hydrophobic (preferably Leu), and Yaa (Ala or Ser) and Zaa (Gly or Ala) have small, neutral side chains.. It participates in protein modification; lipoprotein biosynthesis (signal peptide cleavage). In terms of biological role, this protein specifically catalyzes the removal of signal peptides from prolipoproteins. The polypeptide is Lipoprotein signal peptidase (Mycobacterium avium (strain 104)).